The primary structure comprises 338 residues: tRNA(Ile)-lysidine synthase (338 aa).

An ATP-binding site is contributed by Ser-23–Ser-28.

Belongs to the tRNA(Ile)-lysidine synthase family.

It is found in the cytoplasm. It carries out the reaction cytidine(34) in tRNA(Ile2) + L-lysine + ATP = lysidine(34) in tRNA(Ile2) + AMP + diphosphate + H(+). Its function is as follows. Ligates lysine onto the cytidine present at position 34 of the AUA codon-specific tRNA(Ile) that contains the anticodon CAU, in an ATP-dependent manner. Cytidine is converted to lysidine, thus changing the amino acid specificity of the tRNA from methionine to isoleucine. This Helicobacter pylori (strain J99 / ATCC 700824) (Campylobacter pylori J99) protein is tRNA(Ile)-lysidine synthase.